Reading from the N-terminus, the 179-residue chain is UPF0302 protein BLi02393/BL02764 (179 aa).

The protein belongs to the UPF0302 family.

The sequence is that of UPF0302 protein BLi02393/BL02764 from Bacillus licheniformis (strain ATCC 14580 / DSM 13 / JCM 2505 / CCUG 7422 / NBRC 12200 / NCIMB 9375 / NCTC 10341 / NRRL NRS-1264 / Gibson 46).